Here is a 411-residue protein sequence, read N- to C-terminus: UPF0261 protein SACE_5696 (411 aa).

This sequence belongs to the UPF0261 family.

The sequence is that of UPF0261 protein SACE_5696 from Saccharopolyspora erythraea (strain ATCC 11635 / DSM 40517 / JCM 4748 / NBRC 13426 / NCIMB 8594 / NRRL 2338).